A 139-amino-acid polypeptide reads, in one-letter code: Large ribosomal subunit protein uL16 (139 aa).

It belongs to the universal ribosomal protein uL16 family. As to quaternary structure, part of the 50S ribosomal subunit.

Functionally, binds 23S rRNA and is also seen to make contacts with the A and possibly P site tRNAs. The polypeptide is Large ribosomal subunit protein uL16 (Protochlamydia amoebophila (strain UWE25)).